The chain runs to 676 residues: Protein kinase C delta type (676 aa).

The C2 domain maps to 1–106 (MAPFLRIAFN…KNNGKAEFWL (106 aa)). T43 and T50 each carry phosphothreonine. A Phosphotyrosine modification is found at Y64. Residue S130 is modified to Phosphoserine. T141 is subject to Phosphothreonine. Y155 carries the post-translational modification Phosphotyrosine. A Phorbol-ester/DAG-type 1 zinc finger spans residues 158–208 (NHEFIATFFGQPTFCSVCKDFVWGLNKQGYKCRQCNAAIHKKCIDKIIGRC). T218 carries the phosphothreonine modification. The Phorbol-ester/DAG-type 2 zinc-finger motif lies at 230 to 280 (PHRFKVHNYMSPTFCDHCGSLLWGLVKQGLKCEDCGMNVHHKCREKVANLC). Residues S299, S302, and S304 each carry the phosphoserine; by autocatalysis modification. S307 is modified (phosphoserine). Residue Y313 is modified to Phosphotyrosine. Residue Y334 is modified to Phosphotyrosine; by SRC. In terms of domain architecture, Protein kinase spans 349–603 (FIFHKVLGKG…TGNIKIHPFF (255 aa)). 355–363 (LGKGSFGKV) serves as a coordination point for ATP. Y374 carries the phosphotyrosine modification. K378 provides a ligand contact to ATP. T451 carries the phosphothreonine modification. Catalysis depends on D473, which acts as the Proton acceptor. S503 and S506 each carry phosphoserine. A Phosphothreonine; by autocatalysis modification is found at T507. Y567 carries the post-translational modification Phosphotyrosine. The 72-residue stretch at 604-675 (KTINWTLLEK…VNPKFEHLLE (72 aa)) folds into the AGC-kinase C-terminal domain. A phosphoserine mark is found at S645, S654, S658, and S664.

Belongs to the protein kinase superfamily. AGC Ser/Thr protein kinase family. PKC subfamily. As to quaternary structure, interacts with PDPK1 (via N-terminal region). Interacts with RAD9A. Interacts with CDCP1. Interacts with MUC1. Interacts with VASP. Interacts with CAVIN3. Interacts with PRKD2 (via N-terminus and zing-finger domain 1 and 2) in response to oxidative stress; the interaction is independent of PRKD2 tyrosine phosphorylation. Interacts with PLSC3; interaction is enhanced by UV irradiation. Interacts with PRKCH upstream open reading frame 2; the interaction leads to inhibition of kinase activity. In terms of processing, autophosphorylated and/or phosphorylated at Thr-507, within the activation loop; phosphorylation at Thr-507 is not a prerequisite for enzymatic activity. Autophosphorylated at Ser-299, Ser-302 and Ser-304. Upon TNFSF10/TRAIL treatment, phosphorylated at Tyr-155; phosphorylation is required for its translocation to the endoplasmic reticulum and cleavage by caspase-3. Phosphorylated at Tyr-313, Tyr-334 and Tyr-567; phosphorylation of Tyr-313 and Tyr-567 following thrombin or zymosan stimulation potentiates its kinase activity. Phosphorylated by protein kinase PDPK1; phosphorylation is inhibited by the apoptotic C-terminal cleavage product of PKN2. Phosphorylated at Tyr-313 through a SYK and SRC mechanism downstream of C-type lectin receptors activation, promoting its activation. Post-translationally, proteolytically cleaved into a catalytic subunit and a regulatory subunit by caspase-3 during apoptosis which results in kinase activation.

The protein localises to the cytoplasm. The protein resides in the perinuclear region. It is found in the nucleus. Its subcellular location is the cell membrane. It localises to the mitochondrion. The protein localises to the endomembrane system. It carries out the reaction L-seryl-[protein] + ATP = O-phospho-L-seryl-[protein] + ADP + H(+). The catalysed reaction is L-threonyl-[protein] + ATP = O-phospho-L-threonyl-[protein] + ADP + H(+). It catalyses the reaction L-tyrosyl-[protein] + ATP = O-phospho-L-tyrosyl-[protein] + ADP + H(+). With respect to regulation, novel PKCs (PRKCD, PRKCE, PRKCH and PRKCQ) are calcium-insensitive, but activated by diacylglycerol (DAG) and phosphatidylserine. Three specific sites; Thr-507 (activation loop of the kinase domain), Ser-645 (turn motif) and Ser-664 (hydrophobic region), need to be phosphorylated for its full activation. Activated by caspase-3 (CASP3) cleavage during apoptosis. After cleavage, the pseudosubstrate motif in the regulatory subunit is released from the substrate recognition site of the catalytic subunit, which enables PRKCD to become constitutively activated. The catalytic subunit which displays properties of a sphingosine-dependent protein kinase is activated by D-erythro-sphingosine (Sph) or N,N-dimethyl-D-erythrosphingosine (DMS) or N,N,N-trimethyl-D-erythrosphingosine (TMS), but not by ceramide or Sph-1-P and is strongly inhibited by phosphatidylserine. Inhibited by PRKCH upstream open reading frame 2. Functionally, calcium-independent, phospholipid- and diacylglycerol (DAG)-dependent serine/threonine-protein kinase that plays contrasting roles in cell death and cell survival by functioning as a pro-apoptotic protein during DNA damage-induced apoptosis, but acting as an anti-apoptotic protein during cytokine receptor-initiated cell death, is involved in tumor suppression as well as survival of several cancers, is required for oxygen radical production by NADPH oxidase and acts as positive or negative regulator in platelet functional responses. Negatively regulates B cell proliferation and also has an important function in self-antigen induced B cell tolerance induction. Upon DNA damage, activates the promoter of the death-promoting transcription factor BCLAF1/Btf to trigger BCLAF1-mediated p53/TP53 gene transcription and apoptosis. In response to oxidative stress, interact with and activate CHUK/IKKA in the nucleus, causing the phosphorylation of p53/TP53. In the case of ER stress or DNA damage-induced apoptosis, can form a complex with the tyrosine-protein kinase ABL1 which trigger apoptosis independently of p53/TP53. In cytosol can trigger apoptosis by activating MAPK11 or MAPK14, inhibiting AKT1 and decreasing the level of X-linked inhibitor of apoptosis protein (XIAP), whereas in nucleus induces apoptosis via the activation of MAPK8 or MAPK9. Upon ionizing radiation treatment, is required for the activation of the apoptosis regulators BAX and BAK, which trigger the mitochondrial cell death pathway. Can phosphorylate MCL1 and target it for degradation which is sufficient to trigger for BAX activation and apoptosis. Is required for the control of cell cycle progression both at G1/S and G2/M phases. Mediates phorbol 12-myristate 13-acetate (PMA)-induced inhibition of cell cycle progression at G1/S phase by up-regulating the CDK inhibitor CDKN1A/p21 and inhibiting the cyclin CCNA2 promoter activity. In response to UV irradiation can phosphorylate CDK1, which is important for the G2/M DNA damage checkpoint activation. Can protect glioma cells from the apoptosis induced by TNFSF10/TRAIL, probably by inducing increased phosphorylation and subsequent activation of AKT1. Is highly expressed in a number of cancer cells and promotes cell survival and resistance against chemotherapeutic drugs by inducing cyclin D1 (CCND1) and hyperphosphorylation of RB1, and via several pro-survival pathways, including NF-kappa-B, AKT1 and MAPK1/3 (ERK1/2). Involved in antifungal immunity by mediating phosphorylation and activation of CARD9 downstream of C-type lectin receptors activation, promoting interaction between CARD9 and BCL10, followed by activation of NF-kappa-B and MAP kinase p38 pathways. Can also act as tumor suppressor upon mitogenic stimulation with PMA or TPA. In N-formyl-methionyl-leucyl-phenylalanine (fMLP)-treated cells, is required for NCF1 (p47-phox) phosphorylation and activation of NADPH oxidase activity, and regulates TNF-elicited superoxide anion production in neutrophils, by direct phosphorylation and activation of NCF1 or indirectly through MAPK1/3 (ERK1/2) signaling pathways. May also play a role in the regulation of NADPH oxidase activity in eosinophil after stimulation with IL5, leukotriene B4 or PMA. In collagen-induced platelet aggregation, acts a negative regulator of filopodia formation and actin polymerization by interacting with and negatively regulating VASP phosphorylation. Downstream of PAR1, PAR4 and CD36/GP4 receptors, regulates differentially platelet dense granule secretion; acts as a positive regulator in PAR-mediated granule secretion, whereas it negatively regulates CD36/GP4-mediated granule release. Phosphorylates MUC1 in the C-terminal and regulates the interaction between MUC1 and beta-catenin. The catalytic subunit phosphorylates 14-3-3 proteins (YWHAB, YWHAZ and YWHAH) in a sphingosine-dependent fashion. Phosphorylates ELAVL1 in response to angiotensin-2 treatment. Phosphorylates mitochondrial phospholipid scramblase 3 (PLSCR3), resulting in increased cardiolipin expression on the mitochondrial outer membrane which facilitates apoptosis. Phosphorylates SMPD1 which induces SMPD1 secretion. The sequence is that of Protein kinase C delta type from Homo sapiens (Human).